We begin with the raw amino-acid sequence, 436 residues long: GTPase Der (436 aa).

2 EngA-type G domains span residues 4–167 (PTVA…PVEE) and 175–351 (IRFS…ESQN). Residues 10 to 17 (GRPNVGKS), 57 to 61 (DTGGI), 119 to 122 (NKVD), 181 to 188 (GRPNVGKS), 229 to 233 (DTAGM), and 294 to 297 (NKWD) each bind GTP. Positions 352–436 (KRIPSAVLND…PIHLIARKRK (85 aa)) constitute a KH-like domain.

It belongs to the TRAFAC class TrmE-Era-EngA-EngB-Septin-like GTPase superfamily. EngA (Der) GTPase family. In terms of assembly, associates with the 50S ribosomal subunit.

Functionally, GTPase that plays an essential role in the late steps of ribosome biogenesis. The polypeptide is GTPase Der (Streptococcus pyogenes serotype M1).